The sequence spans 739 residues: MYRLAVRDQCKCALQRTLQQTTANNRQFGGSSSGSGGREQGRRQQEEQGQQGDQGYQGYQSLPPHMREAGFGKVVLFVSPLAAVGGVITYAKYDDDFRKLVEKNVPGAGSVIKVALQEEPPFKGITKNVNDQIDKVKSGIETVTSTVDSVTSKVTGLFGGGSGDDKSKKSKVEPVKATPAEEKRPSKPSEVSKTEAKPVSKPAAAAAPAPAAKPKDNPLPRDVVELEKAIELSAQLAVKEYNVAIGVLKGFNDDVRKVVDKAVENGENSLWTTLKNRASARDTAVATAERAAREAQEKIVACEIALSAAATAQNAKKVEAVRDKIKKLVDHIGNVKDELYRHKDTASVSDKYWRNVEKARNYFIDEIESIFPGLSLADKKLNLSKEDLDLFILHAYTHVLAYQKELQRLQTDGELRLKRAIDSVRGDNDSEALRAQLEYHLEAERRKLAVENQKKIFHIHAESDKLLRLQLKKQAEAHADHIKDIVAQRETDLTRSFKRELEDKLATEKANYKLQLAGMLGKLRGMDAALAERADAERTANQAQALWAACQALWASVRAATPGVHYKDRLRPLKNEINAIAKVAKGDDLVAAVLESVPKEAQERGVYPEDALRERFLNVERVARRLALVPEEGAGLPIYFLSYLQSLFILRPDNPISKDELENKPFDYSKLDTYDILNRARYHVDRSDFLQALKYMNLLQGASRKIAGEWMKEARLMLETQQAANTLMAHAAASGLLYL.

Residues alanine 23–proline 63 form a disordered region. Low complexity predominate over residues glutamate 47–serine 61. The chain crosses the membrane as a helical span at residues alanine 69 to threonine 89. Residues valine 154–leucine 219 form a disordered region. Over residues glycine 163–proline 198 the composition is skewed to basic and acidic residues. Over residues valine 199–alanine 212 the composition is skewed to low complexity. A coiled-coil region spans residues threonine 283 to leucine 339.

It belongs to the MICOS complex subunit Mic60 family. Component of the mitochondrial contact site and cristae organizing system (MICOS) complex. Interacts with the mitochondria-shaping protein Opa1.

The protein localises to the mitochondrion inner membrane. Component of the MICOS complex, a large protein complex of the mitochondrial inner membrane that plays crucial roles in the maintenance of crista junctions, inner membrane architecture, and formation of contact sites to the outer membrane. In Drosophila melanogaster (Fruit fly), this protein is MICOS complex subunit Mic60.